The primary structure comprises 172 residues: C-phycocyanin beta chain (172 aa).

(2R,3E)-phycocyanobilin is bound by residues N35, D39, N72, R77, C82, 82–88, 149–151, and C153; these read CLRDMEI and TTG. N72 is modified (N4-methylasparagine).

The protein belongs to the phycobiliprotein family. In terms of assembly, heterodimer of an alpha and a beta subunit. Dimers further assemble into trimers and the trimers into hexamers. The basic functional unit of phycobiliproteins is a ring-shaped hexamer formed from two back-to-back trimers contacting via the alpha chain subunits. The trimers are composed of alpha/beta subunit heterodimers arranged around a three-fold axis of symmetry. The phycoerythrins also contain a gamma subunit which is located in the center of the hexamer. In terms of processing, contains two covalently linked phycocyanobilin chromophores.

The protein localises to the plastid. It localises to the chloroplast thylakoid membrane. In terms of biological role, light-harvesting photosynthetic tetrapyrrole chromophore-protein from the phycobiliprotein complex (phycobilisome, PBS). Phycocyanin is the major phycobiliprotein in the PBS rod. In Galdieria sulphuraria (Red alga), this protein is C-phycocyanin beta chain (cpcB).